The following is a 482-amino-acid chain: Cobyrinate a,c-diamide synthase (482 aa).

In terms of domain architecture, GATase cobBQ-type spans 248 to 441; sequence RLAIAQDQAF…LHLHWGSQIS (194 aa). The Nucleophile role is filled by Cys-331.

It belongs to the CobB/CbiA family. It depends on Mg(2+) as a cofactor.

The enzyme catalyses cob(II)yrinate + 2 L-glutamine + 2 ATP + 2 H2O = cob(II)yrinate a,c diamide + 2 L-glutamate + 2 ADP + 2 phosphate + 2 H(+). It participates in cofactor biosynthesis; adenosylcobalamin biosynthesis; cob(II)yrinate a,c-diamide from sirohydrochlorin (anaerobic route): step 10/10. Its function is as follows. Catalyzes the ATP-dependent amidation of the two carboxylate groups at positions a and c of cobyrinate, using either L-glutamine or ammonia as the nitrogen source. The protein is Cobyrinate a,c-diamide synthase of Synechocystis sp. (strain ATCC 27184 / PCC 6803 / Kazusa).